We begin with the raw amino-acid sequence, 215 residues long: Thymidylate kinase (215 aa).

Residue 11–18 (GIDGAGKS) participates in ATP binding.

Belongs to the thymidylate kinase family.

It catalyses the reaction dTMP + ATP = dTDP + ADP. Phosphorylation of dTMP to form dTDP in both de novo and salvage pathways of dTTP synthesis. This is Thymidylate kinase from Nitrosomonas eutropha (strain DSM 101675 / C91 / Nm57).